The following is a 155-amino-acid chain: MSLMIEVLREPWADEAIPLPSYATVGAAGADLRANLPPEIRDQGVEIQPLCRVIVPTGLRVAIPAGYEMQIRPRSGLALKHGLSLPNTPGTIDSDYRGPLGVLLTVIGTEAVTLHHGDRIAQAVIAPVVQAVFAPVDRLEETARGAGGFGSTGRG.

Substrate contacts are provided by residues 74-76 (RSG), N87, and 91-93 (TID).

Belongs to the dUTPase family. The cofactor is Mg(2+).

It carries out the reaction dUTP + H2O = dUMP + diphosphate + H(+). It functions in the pathway pyrimidine metabolism; dUMP biosynthesis; dUMP from dCTP (dUTP route): step 2/2. In terms of biological role, this enzyme is involved in nucleotide metabolism: it produces dUMP, the immediate precursor of thymidine nucleotides and it decreases the intracellular concentration of dUTP so that uracil cannot be incorporated into DNA. The sequence is that of Deoxyuridine 5'-triphosphate nucleotidohydrolase from Dinoroseobacter shibae (strain DSM 16493 / NCIMB 14021 / DFL 12).